We begin with the raw amino-acid sequence, 335 residues long: GTPase Obg (335 aa).

One can recognise an Obg domain in the interval Met-1–Leu-159. In terms of domain architecture, OBG-type G spans Ala-160–Glu-328. Residues Gly-166–Ser-173, Phe-191–Val-195, Asp-213–Gly-216, Asn-280–Asp-283, and Ser-309–Ala-311 contribute to the GTP site. 2 residues coordinate Mg(2+): Ser-173 and Thr-193.

This sequence belongs to the TRAFAC class OBG-HflX-like GTPase superfamily. OBG GTPase family. Monomer. The cofactor is Mg(2+).

It localises to the cytoplasm. Functionally, an essential GTPase which binds GTP, GDP and possibly (p)ppGpp with moderate affinity, with high nucleotide exchange rates and a fairly low GTP hydrolysis rate. Plays a role in control of the cell cycle, stress response, ribosome biogenesis and in those bacteria that undergo differentiation, in morphogenesis control. This Gloeobacter violaceus (strain ATCC 29082 / PCC 7421) protein is GTPase Obg.